Reading from the N-terminus, the 133-residue chain is Small ribosomal subunit protein uS9 (133 aa).

Positions 111-133 are disordered; sequence PRRSESKKFGGPGARARKQKSYR.

It belongs to the universal ribosomal protein uS9 family.

This is Small ribosomal subunit protein uS9 from Methanosphaera stadtmanae (strain ATCC 43021 / DSM 3091 / JCM 11832 / MCB-3).